A 283-amino-acid chain; its full sequence is MKRRQKRKHLENEESQETAEKGGGIQRIHRDSPQPQSPLAQVQERGETPPRSQHVSLSFHSSYKTCVSSLCVNKEERGMKIYYMQVQMNKGVAVSWETEETLESLEKQPRMEEVTLSEVVRVGTPPSDVSTRNLLSDSEPSGEEKEHEERTESDSLPGSPTVEDTPRAKTPDWLVTMENGFRCMACCRVFTTMEALQEHVQFGIREGFSCHVFHLTMAQLTGNMESESTQDEQEEENGNEKEEEEKPEAKEEEGQPTEEDLGLRRSWSQCPGCVFHSPKDRNS.

Disordered regions lie at residues 1 to 54 (MKRR…RSQH) and 123 to 171 (GTPP…AKTP). A compositionally biased stretch (polar residues) spans 127 to 138 (SDVSTRNLLSDS). The segment covering 142–153 (GEEKEHEERTES) has biased composition (basic and acidic residues). Position 170 is a phosphothreonine (T170). The C2H2-type; degenerate zinc-finger motif lies at 181–205 (FRCMACCRVFTTMEALQEHVQFGIR). Residues 223–283 (NMESESTQDE…VFHSPKDRNS (61 aa)) form a disordered region. Positions 228–246 (STQDEQEEENGNEKEEEEK) are enriched in acidic residues. Residue S268 is modified to Phosphoserine.

This sequence belongs to the FAM170 family.

Its subcellular location is the nucleus. Its function is as follows. Acts as a nuclear transcription factor that positively regulates the expression of heat shock genes. Binds to heat shock promoter elements (HSE). This is Protein FAM170A (FAM170A) from Macaca fascicularis (Crab-eating macaque).